Reading from the N-terminus, the 478-residue chain is Glycogen synthase (478 aa).

Lys15 serves as a coordination point for ADP-alpha-D-glucose.

Belongs to the glycosyltransferase 1 family. Bacterial/plant glycogen synthase subfamily.

It catalyses the reaction [(1-&gt;4)-alpha-D-glucosyl](n) + ADP-alpha-D-glucose = [(1-&gt;4)-alpha-D-glucosyl](n+1) + ADP + H(+). The protein operates within glycan biosynthesis; glycogen biosynthesis. In terms of biological role, synthesizes alpha-1,4-glucan chains using ADP-glucose. In Bacillus cytotoxicus (strain DSM 22905 / CIP 110041 / 391-98 / NVH 391-98), this protein is Glycogen synthase.